A 63-amino-acid chain; its full sequence is Megourin-3 (63 aa).

As to quaternary structure, monomer. Post-translationally, contains four disulfide bonds.

It is found in the secreted. Functionally, has antimicrobial activity against Gram-positive bacteria and fungi. The polypeptide is Megourin-3 (Megoura viciae (Vetch aphid)).